The following is a 176-amino-acid chain: NAD(P)H-quinone oxidoreductase subunit J (176 aa).

Polar residues-rich tracts occupy residues 1 to 12 and 20 to 30; these read MEKDSQATSSDT and ISQSLSKDGIP. Residues 1 to 30 are disordered; that stretch reads MEKDSQATSSDTSIEKEGVISQSLSKDGIP.

It belongs to the complex I 30 kDa subunit family. In terms of assembly, NDH-1 can be composed of about 15 different subunits; different subcomplexes with different compositions have been identified which probably have different functions.

It localises to the cellular thylakoid membrane. It carries out the reaction a plastoquinone + NADH + (n+1) H(+)(in) = a plastoquinol + NAD(+) + n H(+)(out). The enzyme catalyses a plastoquinone + NADPH + (n+1) H(+)(in) = a plastoquinol + NADP(+) + n H(+)(out). Functionally, NDH-1 shuttles electrons from an unknown electron donor, via FMN and iron-sulfur (Fe-S) centers, to quinones in the respiratory and/or the photosynthetic chain. The immediate electron acceptor for the enzyme in this species is believed to be plastoquinone. Couples the redox reaction to proton translocation, and thus conserves the redox energy in a proton gradient. Cyanobacterial NDH-1 also plays a role in inorganic carbon-concentration. The polypeptide is NAD(P)H-quinone oxidoreductase subunit J (Prochlorococcus marinus (strain AS9601)).